We begin with the raw amino-acid sequence, 150 residues long: Large ribosomal subunit protein bL9 (150 aa).

This sequence belongs to the bacterial ribosomal protein bL9 family.

Binds to the 23S rRNA. In Ruthia magnifica subsp. Calyptogena magnifica, this protein is Large ribosomal subunit protein bL9.